The following is a 358-amino-acid chain: UDP-N-acetylglucosamine--N-acetylmuramyl-(pentapeptide) pyrophosphoryl-undecaprenol N-acetylglucosamine transferase (358 aa).

UDP-N-acetyl-alpha-D-glucosamine is bound by residues 12–14 (TAG), R165, S195, and Q290.

Belongs to the glycosyltransferase 28 family. MurG subfamily.

The protein localises to the cell membrane. The catalysed reaction is di-trans,octa-cis-undecaprenyl diphospho-N-acetyl-alpha-D-muramoyl-L-alanyl-D-glutamyl-meso-2,6-diaminopimeloyl-D-alanyl-D-alanine + UDP-N-acetyl-alpha-D-glucosamine = di-trans,octa-cis-undecaprenyl diphospho-[N-acetyl-alpha-D-glucosaminyl-(1-&gt;4)]-N-acetyl-alpha-D-muramoyl-L-alanyl-D-glutamyl-meso-2,6-diaminopimeloyl-D-alanyl-D-alanine + UDP + H(+). It participates in cell wall biogenesis; peptidoglycan biosynthesis. Functionally, cell wall formation. Catalyzes the transfer of a GlcNAc subunit on undecaprenyl-pyrophosphoryl-MurNAc-pentapeptide (lipid intermediate I) to form undecaprenyl-pyrophosphoryl-MurNAc-(pentapeptide)GlcNAc (lipid intermediate II). The chain is UDP-N-acetylglucosamine--N-acetylmuramyl-(pentapeptide) pyrophosphoryl-undecaprenol N-acetylglucosamine transferase from Clostridium tetani (strain Massachusetts / E88).